We begin with the raw amino-acid sequence, 328 residues long: Malate dehydrogenase (328 aa).

11-17 serves as a coordination point for NAD(+); the sequence is GAAGQIG. Arg-92 and Arg-98 together coordinate substrate. NAD(+) is bound by residues Asn-105, Gln-112, and 129–131; that span reads VGN. Residues Asn-131 and Arg-162 each coordinate substrate. His-187 acts as the Proton acceptor in catalysis.

This sequence belongs to the LDH/MDH superfamily. MDH type 2 family.

It carries out the reaction (S)-malate + NAD(+) = oxaloacetate + NADH + H(+). Catalyzes the reversible oxidation of malate to oxaloacetate. The polypeptide is Malate dehydrogenase (Coxiella burnetii (strain CbuG_Q212) (Coxiella burnetii (strain Q212))).